Here is a 273-residue protein sequence, read N- to C-terminus: Ribosomal RNA small subunit methyltransferase A (273 aa).

S-adenosyl-L-methionine is bound by residues Asn-18, Leu-20, Gly-45, Glu-66, Asp-91, and Asn-113.

This sequence belongs to the class I-like SAM-binding methyltransferase superfamily. rRNA adenine N(6)-methyltransferase family. RsmA subfamily.

The protein localises to the cytoplasm. It catalyses the reaction adenosine(1518)/adenosine(1519) in 16S rRNA + 4 S-adenosyl-L-methionine = N(6)-dimethyladenosine(1518)/N(6)-dimethyladenosine(1519) in 16S rRNA + 4 S-adenosyl-L-homocysteine + 4 H(+). Specifically dimethylates two adjacent adenosines (A1518 and A1519) in the loop of a conserved hairpin near the 3'-end of 16S rRNA in the 30S particle. May play a critical role in biogenesis of 30S subunits. The sequence is that of Ribosomal RNA small subunit methyltransferase A from Erwinia tasmaniensis (strain DSM 17950 / CFBP 7177 / CIP 109463 / NCPPB 4357 / Et1/99).